The sequence spans 715 residues: Fatty acid oxidation complex subunit alpha (715 aa).

Positions 1–190 (MTTTSAFMLN…KAGLVDDVVP (190 aa)) are enoyl-CoA hydratase. The segment at 306–715 (GPLNSVGILG…WTNGETDQGN (410 aa)) is 3-hydroxyacyl-CoA dehydrogenase.

The protein in the N-terminal section; belongs to the enoyl-CoA hydratase/isomerase family. It in the central section; belongs to the 3-hydroxyacyl-CoA dehydrogenase family. As to quaternary structure, heterotetramer of two alpha chains (FadJ) and two beta chains (FadI).

It is found in the cytoplasm. The catalysed reaction is a (3S)-3-hydroxyacyl-CoA = a (2E)-enoyl-CoA + H2O. It catalyses the reaction a 4-saturated-(3S)-3-hydroxyacyl-CoA = a (3E)-enoyl-CoA + H2O. The enzyme catalyses a (3S)-3-hydroxyacyl-CoA + NAD(+) = a 3-oxoacyl-CoA + NADH + H(+). It carries out the reaction (3S)-3-hydroxybutanoyl-CoA = (3R)-3-hydroxybutanoyl-CoA. The protein operates within lipid metabolism; fatty acid beta-oxidation. Functionally, catalyzes the formation of a hydroxyacyl-CoA by addition of water on enoyl-CoA. Also exhibits 3-hydroxyacyl-CoA epimerase and 3-hydroxyacyl-CoA dehydrogenase activities. In Salmonella newport (strain SL254), this protein is Fatty acid oxidation complex subunit alpha.